Consider the following 276-residue polypeptide: TIMELESS-interacting protein (276 aa).

A disordered region spans residues 1-54; sequence MLEQEENGLFEIPDYEHVEDETFPPFPPPGSPERDPAEAEPDEGSGAPVPVPPK. The segment at 64–140 is interaction with TIMELESS; sequence LDATRLTSER…KEVQTCLKRI (77 aa). The span at 217-243 shows a compositional bias: polar residues; sequence SNSQSLENDVTVEESSTGENQEESNGL. The tract at residues 217 to 276 is disordered; it reads SNSQSLENDVTVEESSTGENQEESNGLISADGPHDVPSASTQEEGQLEAEETQLDHPNLD. The residue at position 219 (serine 219) is a Phosphoserine. Position 233 is a phosphothreonine (threonine 233).

The protein belongs to the CSM3 family. As to quaternary structure, interacts with TIMELESS, which impairs TIMELESS self-association (via N-terminus). Associates with the MCM2-7 complex. Interacts with RPA2, PRDX2.

It is found in the cytoplasm. The protein localises to the nucleus. Plays an important role in the control of DNA replication and the maintenance of replication fork stability. Important for cell survival after DNA damage or replication stress. May be specifically required for the ATR-CHEK1 pathway in the replication checkpoint induced by hydroxyurea or ultraviolet light. Forms a complex with TIMELESS and this complex regulates DNA replication processes under both normal and stress conditions, stabilizes replication forks and influences both CHEK1 phosphorylation and the intra-S phase checkpoint in response to genotoxic stress. The protein is TIMELESS-interacting protein (Tipin) of Rattus norvegicus (Rat).